The following is a 1169-amino-acid chain: Pesticidal crystal protein Cry8Ba (1169 aa).

The disordered stretch occupies residues 1–26 (MSPNNQNEYEIIDATPSTSVSNDSNR). Residues 15–25 (TPSTSVSNDSN) are compositionally biased toward polar residues.

The protein belongs to the delta endotoxin family.

Functionally, promotes colloidosmotic lysis by binding to the midgut epithelial cells of insects. Active on various scarabaeid beetles. The sequence is that of Pesticidal crystal protein Cry8Ba (cry8Ba) from Bacillus thuringiensis serovar kumamotoensis.